We begin with the raw amino-acid sequence, 417 residues long: Acid phosphatase (417 aa).

An N-terminal signal peptide occupies residues 1-19 (MFTKQSLVTLLGGLSLAVA). N-linked (GlcNAc...) asparagine glycosylation is found at N122, N187, and N209. The active-site Proton donor is the D216. Residues N218, N333, and N383 are each glycosylated (N-linked (GlcNAc...) asparagine).

Post-translationally, the N-terminus is blocked.

Its subcellular location is the secreted. The catalysed reaction is a phosphate monoester + H2O = an alcohol + phosphate. The chain is Acid phosphatase (phoA) from Aspergillus niger.